The chain runs to 91 residues: Small ribosomal subunit protein bS18 (91 aa).

The protein belongs to the bacterial ribosomal protein bS18 family. Part of the 30S ribosomal subunit. Forms a tight heterodimer with protein bS6.

Functionally, binds as a heterodimer with protein bS6 to the central domain of the 16S rRNA, where it helps stabilize the platform of the 30S subunit. The sequence is that of Small ribosomal subunit protein bS18 from Burkholderia lata (strain ATCC 17760 / DSM 23089 / LMG 22485 / NCIMB 9086 / R18194 / 383).